The sequence spans 470 residues: MNPNQKIITIGSVSLGLVVLNILLHIVSITITVLVLPGNGNNGSCNGTVIREYNETVRIEKVTQWHNTNVIEYIERSESDHFMNNTEALCDAKGFAPFSKDNGIRIGSRGHVFVIREPFVSCSPTECRTFFLTQGSLLNDKHSNGTVKDRSPYRTLMSVEIGQSPNVYQARFEAVAWSATACHDGKKWMTIGVTGPDAKAVAVVHYGGIPTDVINSWAGDILRTQESSCTCIKGECYWVMTDGPANRQAQYRAFKAKQGKIIGQAEISFNGGHIEECSCYPNEGKVECVCRDNWTGTNRPVLVISPDLSYRVGYLCAGLPSDTPRGEDSQFTGSCTSPMGNQGYGVKGFGFRQGNDVWMGRTISRTSRSGFEILKVRNGWVQNSKEQIKRQVVVDNLNWSGYSGSFTLPVELTKRNCLVPCFWVEMIRGKPEEKTIWTSSSSIVMCGVDHEIADWSWHDGAILPFDIDKM.

At 1-14 (MNPNQKIITIGSVS) the chain is on the intravirion side. An involved in apical transport and lipid raft association region spans residues 11 to 32 (GSVSLGLVVLNILLHIVSITIT). Residues 15–35 (LGLVVLNILLHIVSITITVLV) form a helical membrane-spanning segment. The hypervariable stalk region stretch occupies residues 32–86 (TVLVLPGNGNNGSCNGTVIREYNETVRIEKVTQWHNTNVIEYIERSESDHFMNNT). At 36–470 (LPGNGNNGSC…AILPFDIDKM (435 aa)) the chain is on the virion surface side. N-linked (GlcNAc...) asparagine; by host glycans are attached at residues asparagine 42, asparagine 46, asparagine 54, and asparagine 84. A head of neuraminidase region spans residues 89–470 (LCDAKGFAPF…AILPFDIDKM (382 aa)). Cystine bridges form between cysteine 90-cysteine 417, cysteine 122-cysteine 127, cysteine 182-cysteine 229, cysteine 231-cysteine 236, cysteine 277-cysteine 290, cysteine 279-cysteine 288, cysteine 316-cysteine 335, and cysteine 421-cysteine 446. Position 116 (arginine 116) interacts with substrate. N-linked (GlcNAc...) asparagine; by host glycosylation occurs at asparagine 144. Aspartate 149 (proton donor/acceptor) is an active-site residue. Arginine 150 contributes to the substrate binding site. 275–276 (EE) lines the substrate pocket. Arginine 291 lines the substrate pocket. A Ca(2+)-binding site is contributed by aspartate 292. Residue asparagine 293 is glycosylated (N-linked (GlcNAc...) asparagine; by host). Residues glycine 296 and aspartate 322 each contribute to the Ca(2+) site. Arginine 368 is a substrate binding site. The N-linked (GlcNAc...) asparagine; by host glycan is linked to asparagine 398. Tyrosine 402 (nucleophile) is an active-site residue.

This sequence belongs to the glycosyl hydrolase 34 family. As to quaternary structure, homotetramer. Requires Ca(2+) as cofactor. In terms of processing, N-glycosylated.

Its subcellular location is the virion membrane. The protein resides in the host apical cell membrane. The catalysed reaction is Hydrolysis of alpha-(2-&gt;3)-, alpha-(2-&gt;6)-, alpha-(2-&gt;8)- glycosidic linkages of terminal sialic acid residues in oligosaccharides, glycoproteins, glycolipids, colominic acid and synthetic substrates.. With respect to regulation, inhibited by the neuraminidase inhibitors zanamivir (Relenza) and oseltamivir (Tamiflu). These drugs interfere with the release of progeny virus from infected cells and are effective against all influenza strains. Resistance to neuraminidase inhibitors is quite rare. Its function is as follows. Catalyzes the removal of terminal sialic acid residues from viral and cellular glycoconjugates. Cleaves off the terminal sialic acids on the glycosylated HA during virus budding to facilitate virus release. Additionally helps virus spread through the circulation by further removing sialic acids from the cell surface. These cleavages prevent self-aggregation and ensure the efficient spread of the progeny virus from cell to cell. Otherwise, infection would be limited to one round of replication. Described as a receptor-destroying enzyme because it cleaves a terminal sialic acid from the cellular receptors. May facilitate viral invasion of the upper airways by cleaving the sialic acid moieties on the mucin of the airway epithelial cells. Likely to plays a role in the budding process through its association with lipid rafts during intracellular transport. May additionally display a raft-association independent effect on budding. Plays a role in the determination of host range restriction on replication and virulence. Sialidase activity in late endosome/lysosome traffic seems to enhance virus replication. This Aves (Horse) protein is Neuraminidase.